Reading from the N-terminus, the 108-residue chain is MTSIIYSPKDIFEQEFKTSMRGFDKKEVDEFLDNVIKDYENFNAQIEALKAENEALKKAKYQARNTVSATVQQPVPQPTRVAQSATNFDILKRISKLEKEVFGKQIIE.

A coiled-coil region spans residues 32-69 (LDNVIKDYENFNAQIEALKAENEALKKAKYQARNTVSA).

It belongs to the GpsB family. Forms polymers through the coiled coil domains. Interacts with PBP1, MreC and EzrA.

Its subcellular location is the cytoplasm. Divisome component that associates with the complex late in its assembly, after the Z-ring is formed, and is dependent on DivIC and PBP2B for its recruitment to the divisome. Together with EzrA, is a key component of the system that regulates PBP1 localization during cell cycle progression. Its main role could be the removal of PBP1 from the cell pole after pole maturation is completed. Also contributes to the recruitment of PBP1 to the division complex. Not essential for septum formation. This chain is Cell cycle protein GpsB, found in Streptococcus pyogenes serotype M49 (strain NZ131).